The primary structure comprises 467 residues: Argininosuccinate lyase (467 aa).

The protein belongs to the lyase 1 family. Argininosuccinate lyase subfamily.

It is found in the cytoplasm. It carries out the reaction 2-(N(omega)-L-arginino)succinate = fumarate + L-arginine. It participates in amino-acid biosynthesis; L-arginine biosynthesis; L-arginine from L-ornithine and carbamoyl phosphate: step 3/3. The polypeptide is Argininosuccinate lyase (Thioalkalivibrio sulfidiphilus (strain HL-EbGR7)).